A 364-amino-acid polypeptide reads, in one-letter code: Protein Bop (364 aa).

Residues 66–88 (STASGTCGGKPAERGPLAGHMPS) form a disordered region. A BH3 motif is present at residues 114–128 (LDRFLAQLGDYMSFH). A disordered region spans residues 258 to 364 (QLTKESTPGP…PGEPPLSPGF (107 aa)). 2 stretches are compositionally biased toward pro residues: residues 311–322 (AQRPDPAHPGGP) and 355–364 (PGEPPLSPGF).

In terms of assembly, interacts (via BH3 domain) with VDAC1. Interacts with pro-survival Bcl-2 family members, BCL2, BCL2L1 isoform Bcl-X(L), MCL1, BCL2A1 and BCL2L2. Interacts with BAX and BAK1. In terms of tissue distribution, ubiquitously expressed.

It localises to the mitochondrion. In terms of biological role, could induce apoptosis in a BH3 domain-dependent manner. The direct interaction network of Bcl-2 family members may play a key role in modulation RTL10/BOP intrinsic apoptotic signaling activity. This Homo sapiens (Human) protein is Protein Bop.